Reading from the N-terminus, the 233-residue chain is MQESKEQRVHGVFEKIYKNYDQMNSVISFQQHKKWRDKTMQIMNVKEGAKALDVCCGTADWTIALAEAAGKSGEIKGLDFSKNMLSIGEKKVKEGGYSQIELLHGNAMELPFADDSFDFVTIGFGLRNVPDYLTVLKEMRRVVKPGGQVVCLETSQPEMFGFRQAYFLYFKYIMPFFGKMFAKSYKEYSWLQESAREFPGMKELARLFEEAGLTNVKYHSFTGGVAATHIGWK.

S-adenosyl-L-methionine is bound by residues threonine 58, aspartate 79, and 106–107 (NA).

It belongs to the class I-like SAM-binding methyltransferase superfamily. MenG/UbiE family.

It carries out the reaction a 2-demethylmenaquinol + S-adenosyl-L-methionine = a menaquinol + S-adenosyl-L-homocysteine + H(+). Its pathway is quinol/quinone metabolism; menaquinone biosynthesis; menaquinol from 1,4-dihydroxy-2-naphthoate: step 2/2. Methyltransferase required for the conversion of demethylmenaquinol (DMKH2) to menaquinol (MKH2). The protein is Demethylmenaquinone methyltransferase of Bacillus velezensis (strain DSM 23117 / BGSC 10A6 / LMG 26770 / FZB42) (Bacillus amyloliquefaciens subsp. plantarum).